A 165-amino-acid chain; its full sequence is V-type proton ATPase 16 kDa proteolipid subunit (165 aa).

Residues 1–10 are Lumenal-facing; that stretch reads MPSTFSGDET. A helical membrane pass occupies residues 11 to 33; that stretch reads APFFGFLGAAAALVFSCMGAAYG. Residues 34–55 are Cytoplasmic-facing; sequence TAKSGVGVASMGVMRPELVMKS. Residues 56–76 traverse the membrane as a helical segment; the sequence is IVPVVMAGVLGIYGLIIAVII. The Lumenal portion of the chain corresponds to 77–95; it reads STGINPKTKSYYLFDGYAH. The chain crosses the membrane as a helical span at residues 96-117; that stretch reads LSSGLACGLAGLSAGMAIGIVG. Topologically, residues 118-129 are cytoplasmic; that stretch reads DAGVRANAQQPK. The helical transmembrane segment at 130 to 155 threads the bilayer; the sequence is LFVGMILILIFAEALALYGLIVGIIL. Residues 156 to 165 are Lumenal-facing; the sequence is SSRAGQSRAE.

Belongs to the V-ATPase proteolipid subunit family. As to quaternary structure, V-ATPase is a heteromultimeric enzyme composed of a peripheral catalytic V1 complex (main components: subunits A, B, C, D, E, and F) attached to an integral membrane V0 proton pore complex (main component: the proteolipid protein; which is present as a hexamer that forms the proton-conducting pore).

Its subcellular location is the vacuole membrane. In terms of biological role, proton-conducting pore forming subunit of the membrane integral V0 complex of vacuolar ATPase. V-ATPase is responsible for acidifying a variety of intracellular compartments in eukaryotic cells. The polypeptide is V-type proton ATPase 16 kDa proteolipid subunit (Nicotiana tabacum (Common tobacco)).